The chain runs to 105 residues: Heat shock protein HspQ (105 aa).

The interval 76–105 is disordered; sequence EMRDEHPEQPSMDELARTIRKQLQAPRLRN.

This sequence belongs to the HspQ family.

The protein resides in the cytoplasm. Functionally, involved in the degradation of certain denaturated proteins, including DnaA, during heat shock stress. This chain is Heat shock protein HspQ, found in Salmonella agona (strain SL483).